We begin with the raw amino-acid sequence, 523 residues long: Maintenance of mitochondrial morphology protein 1 (523 aa).

Residues 1–43 (MAGSTSASLQTPYFPSSTQINPVRVDHTLPLPPSQPSLSFTQG) are Lumenal-facing. Residues 44–64 (LLVGQLSVVLLIGAFIKFFIF) form a helical membrane-spanning segment. Topologically, residues 65-523 (GEAPPPPSRG…GSMPDTVTET (459 aa)) are cytoplasmic. 5 disordered regions span residues 70-118 (PPSR…SSST), 128-147 (YYSA…RLYH), 295-349 (TSDQ…SKHG), 420-474 (RTGL…DRGL), and 492-523 (GGHQ…VTET). Composition is skewed to polar residues over residues 74–96 (GLSN…TDSS) and 105–118 (STSN…SSST). Positions 137–147 (TPKHGRPRLYH) are enriched in basic residues. In terms of domain architecture, SMP-LTD spans 151–412 (QPESLDWFNV…EPRVQVVGLP (262 aa)). Polar residues predominate over residues 295–312 (TSDQTMSPIPTPHDTTSE). Over residues 449-468 (GVSGGGGSGGGSGGGGGGMR) the composition is skewed to gly residues.

The protein belongs to the MMM1 family. Homodimer. Component of the ER-mitochondria encounter structure (ERMES) or MDM complex, composed of MMM1, MDM10, MDM12 and MDM34. An MMM1 homodimer associates with one molecule of MDM12 on each side in a pairwise head-to-tail manner, and the SMP-LTD domains of MMM1 and MDM12 generate a continuous hydrophobic tunnel for phospholipid trafficking.

The protein resides in the endoplasmic reticulum membrane. In terms of biological role, component of the ERMES/MDM complex, which serves as a molecular tether to connect the endoplasmic reticulum (ER) and mitochondria. Components of this complex are involved in the control of mitochondrial shape and protein biogenesis, and function in nonvesicular lipid trafficking between the ER and mitochondria. The MDM12-MMM1 subcomplex functions in the major beta-barrel assembly pathway that is responsible for biogenesis of all outer membrane beta-barrel proteins, and acts in a late step after the SAM complex. The MDM10-MDM12-MMM1 subcomplex further acts in the TOM40-specific pathway after the action of the MDM12-MMM1 complex. Essential for establishing and maintaining the structure of mitochondria and maintenance of mtDNA nucleoids. This is Maintenance of mitochondrial morphology protein 1 from Paracoccidioides lutzii (strain ATCC MYA-826 / Pb01) (Paracoccidioides brasiliensis).